Reading from the N-terminus, the 406-residue chain is Dual-specificity RNA methyltransferase RlmN (406 aa).

Catalysis depends on E119, which acts as the Proton acceptor. Residues 125–370 (DKGRGTLCVS…AMVRRTRGDD (246 aa)) form the Radical SAM core domain. C132 and C375 form a disulfide bridge. 3 residues coordinate [4Fe-4S] cluster: C139, C143, and C146. Residues 192–193 (GE), S224, 246–248 (SLH), and N332 each bind S-adenosyl-L-methionine. Residue C375 is the S-methylcysteine intermediate of the active site.

Belongs to the radical SAM superfamily. RlmN family. The cofactor is [4Fe-4S] cluster.

The protein resides in the cytoplasm. The enzyme catalyses adenosine(2503) in 23S rRNA + 2 reduced [2Fe-2S]-[ferredoxin] + 2 S-adenosyl-L-methionine = 2-methyladenosine(2503) in 23S rRNA + 5'-deoxyadenosine + L-methionine + 2 oxidized [2Fe-2S]-[ferredoxin] + S-adenosyl-L-homocysteine. The catalysed reaction is adenosine(37) in tRNA + 2 reduced [2Fe-2S]-[ferredoxin] + 2 S-adenosyl-L-methionine = 2-methyladenosine(37) in tRNA + 5'-deoxyadenosine + L-methionine + 2 oxidized [2Fe-2S]-[ferredoxin] + S-adenosyl-L-homocysteine. Specifically methylates position 2 of adenine 2503 in 23S rRNA and position 2 of adenine 37 in tRNAs. m2A2503 modification seems to play a crucial role in the proofreading step occurring at the peptidyl transferase center and thus would serve to optimize ribosomal fidelity. This is Dual-specificity RNA methyltransferase RlmN from Xylella fastidiosa (strain Temecula1 / ATCC 700964).